A 319-amino-acid chain; its full sequence is Lambda-crystallin homolog (319 aa).

Alanine 2 carries the N-acetylalanine modification. Position 3 is a phosphoserine (serine 3). NAD(+) is bound by residues 16 to 17 (LI), aspartate 36, glutamate 97, and lysine 102.

Belongs to the 3-hydroxyacyl-CoA dehydrogenase family. In terms of assembly, homodimer.

The protein localises to the cytoplasm. The enzyme catalyses L-gulonate + NAD(+) = 3-dehydro-L-gulonate + NADH + H(+). Inhibited by malonate. Functionally, has high L-gulonate 3-dehydrogenase activity. It also exhibits low dehydrogenase activity toward L-3-hydroxybutyrate (HBA) and L-threonate. The chain is Lambda-crystallin homolog (Cryl1) from Rattus norvegicus (Rat).